The chain runs to 409 residues: Sperm equatorial segment protein 1 (409 aa).

The first 18 residues, Met1–Leu18, serve as a signal peptide directing secretion. An N-linked (GlcNAc...) asparagine glycan is attached at Asn132. The interval Glu141–Thr223 is disordered. A compositionally biased stretch (acidic residues) spans Pro167–Pro177. Positions Asn198–Ser208 are enriched in polar residues. Residues Thr209–Thr223 show a composition bias toward low complexity.

This sequence belongs to the SPESP1 family. Glycosylated. In testis there are two predominant forms of 77- and 67-kDa and a form of 47-kDa, whereas in epididymal sperm from caput, corpus, and cauda there are two forms of 47- and 43-kDa. Testis forms contain complex carbohydrate residues. Epididymal sperm forms are N-glycosylated. Then undergoes significant glycosylation in the testis and that the majority of these glycoconjugates are removed by the time sperm reach the caput epididymis.

The protein resides in the cytoplasmic vesicle. The protein localises to the secretory vesicle. It is found in the acrosome. Functionally, involved in fertilization ability of sperm. In Rattus norvegicus (Rat), this protein is Sperm equatorial segment protein 1.